The following is a 367-amino-acid chain: Mannan endo-1,4-beta-mannosidase (367 aa).

An N-terminal signal peptide occupies residues 1-17; the sequence is MLLTALAVLFASTGCQA. Substrate is bound by residues Trp79 and Asn176. The Proton donor role is filled by Glu177. An intrachain disulfide couples Cys192 to Cys259. Residues Trp205, Trp240, and Tyr279 each coordinate substrate. Residue Glu308 is the Nucleophile of the active site. A substrate-binding site is contributed by Trp337.

In terms of assembly, monomer. Post-translationally, the disulfide bond between Cys-192 and Cys-259 has not been observed in X-ray crystallography. This may be a consequence of the X-ray radiation.

The enzyme catalyses Random hydrolysis of (1-&gt;4)-beta-D-mannosidic linkages in mannans, galactomannans and glucomannans.. Hydrolyzes 1,4-beta linked polysaccharide backbones of mannans. Hydrolyzes mannohexaose (M6) preferentially to mannotriose (M4) and less preferentially to mannotetraose (M3), mannopentaose (M5), and mannobiose (M2); hydrolyzes M5 preferentially to M2, and M3, and less preferentially to mannotetraose M4; hydrolyzes M4 preferentially to M3, and less preferentially to mannose (M1), plus very little M2. Does not hydrolyze mannobiose or mannotriose. Does not hydrolyze xlyan, starch, cellulose or galactose. This Mytilus edulis (Blue mussel) protein is Mannan endo-1,4-beta-mannosidase.